Consider the following 228-residue polypeptide: Cytochrome b6-f complex iron-sulfur subunit 2, chloroplastic (228 aa).

A chloroplast-targeting transit peptide spans 1–49 (MASSTLSPVTQLCSSKSGLSSVSQCLLLKPMKINSHGLGKDKRMKVKCM). Residues 71-91 (LLLGALSLPTAGMLVPYATFF) traverse the membrane as a helical segment. The region spanning 115 to 211 (ASEWLKTHPP…ADIDDGKVVF (97 aa)) is the Rieske domain. [2Fe-2S] cluster is bound by residues cysteine 157, histidine 159, cysteine 175, and histidine 178. Cysteine 162 and cysteine 177 are disulfide-bonded.

Belongs to the Rieske iron-sulfur protein family. The 4 large subunits of the cytochrome b6-f complex are cytochrome b6, subunit IV (17 kDa polypeptide, petD), cytochrome f and the Rieske protein, while the 4 small subunits are petG, petL, petM and petN. The complex functions as a dimer. [2Fe-2S] cluster serves as cofactor.

The protein resides in the plastid. It localises to the chloroplast thylakoid membrane. It carries out the reaction 2 oxidized [plastocyanin] + a plastoquinol + 2 H(+)(in) = 2 reduced [plastocyanin] + a plastoquinone + 4 H(+)(out). Component of the cytochrome b6-f complex, which mediates electron transfer between photosystem II (PSII) and photosystem I (PSI), cyclic electron flow around PSI, and state transitions. The protein is Cytochrome b6-f complex iron-sulfur subunit 2, chloroplastic (petC2) of Nicotiana tabacum (Common tobacco).